The sequence spans 119 residues: DNA-binding protein Maeo_0998 (119 aa).

Over residues 1–11 the composition is skewed to basic and acidic residues; the sequence is MDIEEIKRQKM. The disordered stretch occupies residues 1–36; it reads MDIEEIKRQKMMELQQQQAQGAPNPEEIQQQQEQER. Residues 15-32 show a composition bias toward low complexity; that stretch reads QQQQAQGAPNPEEIQQQQ.

This sequence belongs to the PDCD5 family.

This Methanococcus aeolicus (strain ATCC BAA-1280 / DSM 17508 / OCM 812 / Nankai-3) protein is DNA-binding protein Maeo_0998.